A 434-amino-acid polypeptide reads, in one-letter code: ATP-dependent protease ATPase subunit HslU (434 aa).

ATP-binding positions include I18, 60 to 65 (GVGKTE), D247, E312, and R384.

The protein belongs to the ClpX chaperone family. HslU subfamily. In terms of assembly, a double ring-shaped homohexamer of HslV is capped on each side by a ring-shaped HslU homohexamer. The assembly of the HslU/HslV complex is dependent on binding of ATP.

The protein resides in the cytoplasm. Functionally, ATPase subunit of a proteasome-like degradation complex; this subunit has chaperone activity. The binding of ATP and its subsequent hydrolysis by HslU are essential for unfolding of protein substrates subsequently hydrolyzed by HslV. HslU recognizes the N-terminal part of its protein substrates and unfolds these before they are guided to HslV for hydrolysis. The polypeptide is ATP-dependent protease ATPase subunit HslU (Sinorhizobium fredii (strain NBRC 101917 / NGR234)).